We begin with the raw amino-acid sequence, 434 residues long: Adenylosuccinate synthetase (434 aa).

GTP is bound by residues 15–21 (GDEGKGK) and 43–45 (GHT). Asp16 acts as the Proton acceptor in catalysis. Residues Asp16 and Gly43 each coordinate Mg(2+). IMP-binding positions include 16–19 (DEGK), 41–44 (NAGH), Thr133, Arg147, Gln228, Thr243, and Arg307. The active-site Proton donor is the His44. 303–309 (SVTGRAR) provides a ligand contact to substrate. GTP-binding positions include Arg309, 335-337 (KLD), and 418-420 (STG).

Belongs to the adenylosuccinate synthetase family. As to quaternary structure, homodimer. Mg(2+) is required as a cofactor.

It is found in the cytoplasm. It carries out the reaction IMP + L-aspartate + GTP = N(6)-(1,2-dicarboxyethyl)-AMP + GDP + phosphate + 2 H(+). Its pathway is purine metabolism; AMP biosynthesis via de novo pathway; AMP from IMP: step 1/2. In terms of biological role, plays an important role in the de novo pathway of purine nucleotide biosynthesis. Catalyzes the first committed step in the biosynthesis of AMP from IMP. In Neisseria gonorrhoeae (strain NCCP11945), this protein is Adenylosuccinate synthetase.